We begin with the raw amino-acid sequence, 128 residues long: Large ribosomal subunit protein bL20c (128 aa).

This sequence belongs to the bacterial ribosomal protein bL20 family.

The protein localises to the plastid. Binds directly to 23S ribosomal RNA and is necessary for the in vitro assembly process of the 50S ribosomal subunit. It is not involved in the protein synthesizing functions of that subunit. This chain is Large ribosomal subunit protein bL20c (rpl20), found in Lathraea clandestina (Purple toothwort).